Reading from the N-terminus, the 669-residue chain is Dymeclin (669 aa).

Glycine 2 is lipidated: N-myristoyl glycine.

The protein belongs to the dymeclin family. Myristoylated in vitro; myristoylation is not essential for protein targeting to Golgi compartment.

The protein localises to the cytoplasm. Its subcellular location is the golgi apparatus. In terms of biological role, necessary for correct organization of Golgi apparatus. This is Dymeclin (dym) from Xenopus laevis (African clawed frog).